The chain runs to 509 residues: Bestrophin-2a (509 aa).

At 1 to 31 (MTVTYTARVANARFGGFSQLLLLWRGSIYKL) the chain is on the cytoplasmic side. Position 10 (Ala-10) interacts with Ca(2+). The helical transmembrane segment at 32-51 (LWRELLCFLGFYMALSAAYR) threads the bilayer. Residues 52 to 60 (FVLTEGQKR) are Extracellular-facing. The chain crosses the membrane as a helical span at residues 61–82 (YFEKLVIYCDQYASLIPVSFVL). Residues 83 to 238 (GFYVTLVVNR…WISVPLVYTQ (156 aa)) are Cytoplasmic-facing. The helical transmembrane segment at 239–255 (VVTIALYSYFLACLIGR) threads the bilayer. Over 256 to 274 (QFLDPAQGYKDHDLDLCVP) the chain is Extracellular. The chain crosses the membrane as a helical span at residues 275 to 288 (IFTLLQFFFYAGWL). Residues 289–509 (KVAEQLINPF…PIGEEEENLA (221 aa)) lie on the Cytoplasmic side of the membrane. Gln-293, Asn-296, Asp-301, and Asp-304 together coordinate Ca(2+). Residues 454–509 (DPGLPEPEAPPPAGPEPLTLIPGPVEPFSIVTMPGPRGPAPPWLPSPIGEEEENLA) are disordered. 2 stretches are compositionally biased toward pro residues: residues 457–468 (LPEPEAPPPAGP) and 489–498 (PRGPAPPWLP).

Belongs to the anion channel-forming bestrophin (TC 1.A.46) family. Calcium-sensitive chloride channel subfamily. In terms of assembly, pentamer. Interacts with GLUL; this interaction tethers a fraction of GLUL to the membrane, causing a decrease of cytosolic glutamine synthase (GS) activity and inhibits the chloride channel activity of BEST2 by affecting the gating at the aperture in the absence of intracellular glutamate. In terms of tissue distribution, mainly confined to the retinal pigment epithelium. Expressed in colon.

The protein resides in the cell membrane. It is found in the basolateral cell membrane. The catalysed reaction is chloride(in) = chloride(out). The enzyme catalyses hydrogencarbonate(in) = hydrogencarbonate(out). It carries out the reaction L-glutamate(out) = L-glutamate(in). It catalyses the reaction iodide(out) = iodide(in). The catalysed reaction is L-glutamine(out) = L-glutamine(in). With respect to regulation, chloride channel activity is allosterically inhibited by GLUL/glutamine synthase (GS) which affects the gating at the aperture in the absence of intracellular glutamate. Inhibitory effect of GLUL is relieved upon increasing of L-glutamate intracellular level. Ligand-gated anion channel that allows the movement of anions across cell membranes when activated by calcium (Ca2+). Transports a large specter of anions, namely mediates the movement of chloride, L-glutamate and iodide. Calcium-binding triggers the dilation of the aperture, but calcium-dependent gating is only effective when the size of the passing anion is bigger than the closed aperture. Mediates the calcium-activated hydrogencarbonate movement and participates in colonic hydrogencarbonate secretion concomitant with mucin secretion. In non-pigmented epithelium (NPE), mediates the efflux of intracellular L-glutamate; binding of intracellular L-glutamate activates and open both the neck and the aperture of the channel, leading to L-glutamate exit promoting chloride influx movement from the extracellular side in trans. Also exhibits a directional permeability for intracellular glutamine, in a similar manner as for L-glutamate. This Homo sapiens (Human) protein is Bestrophin-2a.